We begin with the raw amino-acid sequence, 245 residues long: 1-(5-phosphoribosyl)-5-[(5-phosphoribosylamino)methylideneamino] imidazole-4-carboxamide isomerase (245 aa).

Asp7 serves as the catalytic Proton acceptor. Asp129 functions as the Proton donor in the catalytic mechanism.

This sequence belongs to the HisA/HisF family.

It localises to the cytoplasm. It catalyses the reaction 1-(5-phospho-beta-D-ribosyl)-5-[(5-phospho-beta-D-ribosylamino)methylideneamino]imidazole-4-carboxamide = 5-[(5-phospho-1-deoxy-D-ribulos-1-ylimino)methylamino]-1-(5-phospho-beta-D-ribosyl)imidazole-4-carboxamide. Its pathway is amino-acid biosynthesis; L-histidine biosynthesis; L-histidine from 5-phospho-alpha-D-ribose 1-diphosphate: step 4/9. The protein is 1-(5-phosphoribosyl)-5-[(5-phosphoribosylamino)methylideneamino] imidazole-4-carboxamide isomerase of Shewanella sp. (strain W3-18-1).